A 423-amino-acid polypeptide reads, in one-letter code: UPF0229 protein PSPA7_0730 (423 aa).

The tract at residues 84–107 is disordered; sequence AGEHIARPSGGGGGRGGGKASNSG. Over residues 92 to 102 the composition is skewed to gly residues; that stretch reads SGGGGGRGGGK.

The protein belongs to the UPF0229 family.

This is UPF0229 protein PSPA7_0730 from Pseudomonas paraeruginosa (strain DSM 24068 / PA7) (Pseudomonas aeruginosa (strain PA7)).